We begin with the raw amino-acid sequence, 337 residues long: 3-isopropylmalate dehydrogenase (337 aa).

Residues arginine 88, arginine 98, arginine 122, and aspartate 212 each coordinate substrate. 3 residues coordinate Mg(2+): aspartate 212, aspartate 236, and aspartate 240. 272-284 (GSAPDIAGKGIAD) is an NAD(+) binding site.

The protein belongs to the isocitrate and isopropylmalate dehydrogenases family. LeuB type 2 subfamily. Homodimer. Requires Mg(2+) as cofactor. Mn(2+) is required as a cofactor.

Its subcellular location is the cytoplasm. It catalyses the reaction (2R,3S)-3-isopropylmalate + NAD(+) = 4-methyl-2-oxopentanoate + CO2 + NADH. The protein operates within amino-acid biosynthesis; L-leucine biosynthesis; L-leucine from 3-methyl-2-oxobutanoate: step 3/4. Its function is as follows. Catalyzes the oxidation of 3-carboxy-2-hydroxy-4-methylpentanoate (3-isopropylmalate) to 3-carboxy-4-methyl-2-oxopentanoate. The product decarboxylates to 4-methyl-2 oxopentanoate. This chain is 3-isopropylmalate dehydrogenase, found in Rhodococcus erythropolis (strain PR4 / NBRC 100887).